Consider the following 468-residue polypeptide: Zinc finger protein 672 (468 aa).

4 C2H2-type zinc fingers span residues 15–37 (YSCS…ERAH), 43–65 (FCCL…RWTH), 71–93 (YICS…LGTH), and 100–123 (RPCR…ARQH). A C2H2-type 5; degenerate zinc finger spans residues 129-151 (HRCPLCARSFRQSALPFHLARAH). C2H2-type zinc fingers lie at residues 167–189 (YHCT…SRIH), 202–224 (HLCG…LQRH), 230–252 (FKCP…QRTH), 258–280 (YACS…QRSH), 286–308 (HVCA…QRSH), 314–336 (FPCP…LRTH), 342–364 (YHCE…LRNH), 370–392 (HKCP…RKTH), and 398–420 (AECT…QRSH).

Belongs to the krueppel C2H2-type zinc-finger protein family.

The protein resides in the nucleus. Functionally, may be involved in transcriptional regulation. This Mus musculus (Mouse) protein is Zinc finger protein 672 (Znf672).